The following is a 473-amino-acid chain: Myocyte-specific enhancer factor 2C (473 aa).

In terms of domain architecture, MADS-box spans 1 to 61; it reads MGRKKIQITR…NKLFQYASTD (61 aa). The residue at position 4 (lysine 4) is an N6-acetyllysine. Positions 58 to 86 form a DNA-binding region, mef2-type; sequence ASTDMDKVLLKYTEYNEPHESRTNSDIVE. Position 59 is a phosphoserine; by CK2 (serine 59). The interval 91 to 116 is disordered; the sequence is KGLNGCDSPDPDADDSVGHSPESEDK. Phosphoserine is present on residues serine 98, serine 106, and serine 110. 2 positions are modified to N6-acetyllysine: lysine 116 and lysine 119. The disordered stretch occupies residues 180-206; it reads NSMSPGVTHRPPSAGNTGGLMGGDLTS. Phosphoserine occurs at positions 222 and 228. N6-acetyllysine occurs at positions 234 and 239. Serine 240 is subject to Phosphoserine. Residues lysine 252 and lysine 264 each carry the N6-acetyllysine modification. The tract at residues 271–278 is beta domain; it reads SEDVDLLL. 2 positions are modified to phosphothreonine; by MAPK14: threonine 293 and threonine 300. Residues 368-399 are transcription repressor; that stretch reads ACTSTHLSQSSNLSLPSTQSLNIKSEPVSPPR. Residues 375-390 are compositionally biased toward polar residues; that stretch reads SQSSNLSLPSTQSLNI. Residues 375-473 form a disordered region; the sequence is SQSSNLSLPS…RMRLSEGWAT (99 aa). Lysine 391 is covalently cross-linked (Glycyl lysine isopeptide (Lys-Gly) (interchain with G-Cter in SUMO)). The residue at position 396 (serine 396) is a Phosphoserine; by CDK5. Serine 419 carries the post-translational modification Phosphoserine; by MAPK7. The span at 419 to 432 shows a compositional bias: low complexity; the sequence is SPVDSLSSCSSSYD. Residues 433 to 443 show a composition bias toward basic and acidic residues; sequence GSDREDHRNEF. Serine 445 bears the Phosphoserine mark.

Belongs to the MEF2 family. As to quaternary structure, forms a complex with class II HDACs in undifferentiating cells. On myogenic differentiation, HDACs are released into the cytoplasm allowing MEF2s to interact with other proteins for activation. Interacts with EP300 in differentiating cells; the interaction acetylates MEF2C leading to increased DNA binding and activation. Interacts with HDAC7 and CARM1. Interacts with HDAC4 and HDAC9; the interaction with HDACs represses transcriptional activity. Interacts with LPIN1. Interacts with MYOCD. Interacts with AKAP13. Interacts with FOXK1; the interaction inhibits MEF2C transactivation activity. Interacts (via N-terminus) with HABP4; this interaction decreases DNA-binding activity of MEF2C in myocardial cells in response to mechanical stress. Interacts with JPH2; interaction specifically takes place with the Junctophilin-2 N-terminal fragment cleavage product of JPH2. Interacts (via MADS box) with SOX18. Interacts with PHF7; the interaction promotes MEF2C binding to its transcription targets. Post-translationally, phosphorylated on Ser-59; which enhances DNA binding activity. Phosphorylated on Ser-396; which is required for Lys-391 sumoylation and inhibits transcriptional activity. Acetylated by p300 on several sites in diffentiating myocytes. Acetylation on Lys-4 increases DNA binding and transactivation. In terms of processing, sumoylated on Lys-391 with SUMO2 but not SUMO1; which represses transcriptional activity. Post-translationally, proteolytically cleaved in cerebellar granule neurons on several sites by caspase 3 and caspase 7 following neurotoxicity. Preferentially cleaves the CDK5-mediated hyperphosphorylated form which leads to neuron apoptosis and transcriptional inactivation. Expressed in the heart. Expressed in cardiac myocytes (at protein level).

Its subcellular location is the nucleus. The protein resides in the cytoplasm. The protein localises to the sarcoplasm. In terms of biological role, transcription activator which binds specifically to the MEF2 element present in the regulatory regions of many muscle-specific genes. Controls cardiac morphogenesis and myogenesis, and is also involved in vascular development. Enhances transcriptional activation mediated by SOX18. Plays an essential role in hippocampal-dependent learning and memory by suppressing the number of excitatory synapses and thus regulating basal and evoked synaptic transmission. Crucial for normal neuronal development, distribution, and electrical activity in the neocortex. Necessary for proper development of megakaryocytes and platelets and for bone marrow B-lymphopoiesis. Required for B-cell survival and proliferation in response to BCR stimulation, efficient IgG1 antibody responses to T-cell-dependent antigens and for normal induction of germinal center B-cells. May also be involved in neurogenesis and in the development of cortical architecture. In Rattus norvegicus (Rat), this protein is Myocyte-specific enhancer factor 2C.